Reading from the N-terminus, the 310-residue chain is tRNA-5-methyluridine(54) 2-sulfurtransferase (310 aa).

Residues Cys3, Cys6, Cys22, and His25 each contribute to the Zn(2+) site. Ala53 and Ile79 together coordinate ATP. The [4Fe-4S] cluster site is built by Cys128 and Cys131. The cysteines at positions 128 and 220 are disulfide-linked. 2 residues coordinate ATP: Lys135 and Gly154. [4Fe-4S] cluster is bound at residue Cys220. Residues Cys272, Cys275, Cys284, and Cys287 each contribute to the Zn(2+) site.

The protein belongs to the TtcA family. TtuA subfamily. As to quaternary structure, homodimer. [4Fe-4S] cluster is required as a cofactor. The cofactor is Mg(2+).

The enzyme catalyses 5-methyluridine(54) in tRNA + hydrogen sulfide + ATP = 5-methyl-2-thiouridine(54) in tRNA + AMP + diphosphate. It functions in the pathway tRNA modification. Functionally, catalyzes the ATP-dependent 2-thiolation of 5-methyluridine residue at position 54 in the T loop of tRNAs, leading to 5-methyl-2-thiouridine (m(5)s(2)U or s(2)T). This modification allows thermal stabilization of tRNAs in thermophilic microorganisms, and is required for cell growth at high temperatures. Can use free sulfide as sulfur source in vitro, which may be also the sulfur source in vivo. The chain is tRNA-5-methyluridine(54) 2-sulfurtransferase from Pyrococcus horikoshii (strain ATCC 700860 / DSM 12428 / JCM 9974 / NBRC 100139 / OT-3).